Reading from the N-terminus, the 208-residue chain is Guanylate kinase (208 aa).

One can recognise a Guanylate kinase-like domain in the interval 4-181; that stretch reads GLLIVISGPS…AVEKIQSIIS (178 aa). Position 11–18 (11–18) interacts with ATP; the sequence is GPSGTGKG.

The protein belongs to the guanylate kinase family.

Its subcellular location is the cytoplasm. The enzyme catalyses GMP + ATP = GDP + ADP. Its function is as follows. Essential for recycling GMP and indirectly, cGMP. This Clostridium tetani (strain Massachusetts / E88) protein is Guanylate kinase.